The chain runs to 353 residues: D-alanine--D-alanine ligase (353 aa).

In terms of domain architecture, ATP-grasp spans 141–349; the sequence is KAAFAAAGLS…LPQLVAELVD (209 aa). Residue 176-231 coordinates ATP; the sequence is EQELGYPCFVKPANLGSSVGITKANNRDELLAGLHQAAALDPRLLVEQGVNARELE. 3 residues coordinate Mg(2+): aspartate 302, glutamate 316, and asparagine 318.

This sequence belongs to the D-alanine--D-alanine ligase family. Mg(2+) serves as cofactor. The cofactor is Mn(2+).

It is found in the cytoplasm. The catalysed reaction is 2 D-alanine + ATP = D-alanyl-D-alanine + ADP + phosphate + H(+). Its pathway is cell wall biogenesis; peptidoglycan biosynthesis. Functionally, cell wall formation. This chain is D-alanine--D-alanine ligase, found in Synechococcus sp. (strain WH7803).